Reading from the N-terminus, the 478-residue chain is Chromosomal replication initiator protein DnaA (478 aa).

A domain I, interacts with DnaA modulators region spans residues 1–95 (MNKTLNPQEV…DVLEKEITEE (95 aa)). The tract at residues 96 to 141 (INDLVQSMEEEDFALIDHTKPVIPNFFDQNTRVNFGGGPNNHHPTT) is domain II. Residues 142 to 358 (GVNPRFTFDN…GALLRIFALA (217 aa)) form a domain III, AAA+ region region. Gly186, Gly188, Lys189, and Thr190 together coordinate ATP. Residues 359-478 (SFNKEEINMT…YKLTQFILRR (120 aa)) form a domain IV, binds dsDNA region.

Belongs to the DnaA family. In terms of assembly, oligomerizes as a right-handed, spiral filament on DNA at oriC.

The protein localises to the cytoplasm. Its function is as follows. Plays an essential role in the initiation and regulation of chromosomal replication. ATP-DnaA binds to the origin of replication (oriC) to initiate formation of the DNA replication initiation complex once per cell cycle. Binds the DnaA box (a 9 base pair repeat at the origin) and separates the double-stranded (ds)DNA. Forms a right-handed helical filament on oriC DNA; dsDNA binds to the exterior of the filament while single-stranded (ss)DNA is stabiized in the filament's interior. The ATP-DnaA-oriC complex binds and stabilizes one strand of the AT-rich DNA unwinding element (DUE), permitting loading of DNA polymerase. After initiation quickly degrades to an ADP-DnaA complex that is not apt for DNA replication. Binds acidic phospholipids. The sequence is that of Chromosomal replication initiator protein DnaA from Tropheryma whipplei (strain TW08/27) (Whipple's bacillus).